The primary structure comprises 65 residues: uncharacterized protein (65 aa).

This is an uncharacterized protein from Rickettsia conorii (strain ATCC VR-613 / Malish 7).